The following is a 36-amino-acid chain: Photosystem I reaction center subunit VIII (36 aa).

A helical transmembrane segment spans residues 4 to 24 (FSLPSILVPLVGLVLPAIAMA).

It belongs to the PsaI family.

The protein resides in the plastid. It localises to the chloroplast thylakoid membrane. Its function is as follows. May help in the organization of the PsaL subunit. The chain is Photosystem I reaction center subunit VIII from Piper cenocladum (Ant piper).